Consider the following 177-residue polypeptide: Putative HTH-type transcriptional regulator YvaV (177 aa).

The segment at residues 49 to 73 (LTELSEATGMSKTRMSQVVREMLDA) is a DNA-binding region (H-T-H motif).

This sequence belongs to the GbsR family.

The chain is Putative HTH-type transcriptional regulator YvaV (yvaV) from Bacillus subtilis (strain 168).